The chain runs to 403 residues: Imidazolonepropionase (403 aa).

Residues His69 and His71 each contribute to the Fe(3+) site. Residues His69 and His71 each contribute to the Zn(2+) site. Residues Arg78, Tyr141, and His174 each contribute to the 4-imidazolone-5-propanoate site. Tyr141 is an N-formimidoyl-L-glutamate binding site. Residue His239 participates in Fe(3+) binding. His239 is a Zn(2+) binding site. Position 242 (Gln242) interacts with 4-imidazolone-5-propanoate. Asp314 lines the Fe(3+) pocket. Asp314 contributes to the Zn(2+) binding site. Positions 316 and 318 each coordinate N-formimidoyl-L-glutamate. Ser319 contributes to the 4-imidazolone-5-propanoate binding site.

It belongs to the metallo-dependent hydrolases superfamily. HutI family. It depends on Zn(2+) as a cofactor. Requires Fe(3+) as cofactor.

Its subcellular location is the cytoplasm. The enzyme catalyses 4-imidazolone-5-propanoate + H2O = N-formimidoyl-L-glutamate. It participates in amino-acid degradation; L-histidine degradation into L-glutamate; N-formimidoyl-L-glutamate from L-histidine: step 3/3. In terms of biological role, catalyzes the hydrolytic cleavage of the carbon-nitrogen bond in imidazolone-5-propanoate to yield N-formimidoyl-L-glutamate. It is the third step in the universal histidine degradation pathway. This is Imidazolonepropionase from Legionella pneumophila (strain Paris).